A 349-amino-acid polypeptide reads, in one-letter code: Leukotriene B4 receptor 1 (349 aa).

Over 1–19 (MNTTSPAAPSSSGVSFISL) the chain is Extracellular. N2 is a glycosylation site (N-linked (GlcNAc...) asparagine). The helical transmembrane segment at 20–42 (LVIIVLSVALAVGLPGNSFVVWS) threads the bilayer. The Cytoplasmic portion of the chain corresponds to 43–54 (ILAKLRKRSVTA). A helical membrane pass occupies residues 55–75 (LMVLHLALADLAVLLTAPFFL). Residues 76–91 (YSVAQGTWTFGLSSCR) are Extracellular-facing. The helical transmembrane segment at 92–113 (LFHYVCGVSMYASVLLIMTMSL) threads the bilayer. The Cytoplasmic segment spans residues 114–138 (DRSLAVALPFVSQKLRTKAVAWRVL). The helical transmembrane segment at 139–159 (AGIWVMSVLLATPVLLYRTVH) threads the bilayer. At 160–179 (LGLNNRSLTCFLKYPSERHR) the chain is on the extracellular side. A glycan (N-linked (GlcNAc...) asparagine) is linked at N164. A helical membrane pass occupies residues 180 to 200 (AFHLFFEVITGFLLPFLVVVA). At 201-222 (SYCDIGRRLRARRFRRSRRTGR) the chain is on the cytoplasmic side. A helical transmembrane segment spans residues 223–243 (LVALIILAFAAFWLPYHVVNL). Residues 244-269 (AEGFRAAAGKALGSGPVGRRLLLARH) lie on the Extracellular side of the membrane. A helical transmembrane segment spans residues 270 to 290 (VLITLAFLSSSVNPLLYACAG). At 291–349 (GGLLRSAGVGFIAKLLEGTGSETSSSRRKGTLAQTLRGTPASPEPDPAESLTASTNPLE) the chain is on the cytoplasmic side. A disordered region spans residues 311–349 (SETSSSRRKGTLAQTLRGTPASPEPDPAESLTASTNPLE).

This sequence belongs to the G-protein coupled receptor 1 family. Phosphorylated by GRK6 upon leukotriene B4 binding; which promotes desensitization.

It localises to the cell membrane. In terms of biological role, receptor for extracellular ATP &gt; UTP and ADP. The activity of this receptor is mediated by G proteins which activate a phosphatidylinositol-calcium second messenger system. May be the cardiac P2Y receptor involved in the regulation of cardiac muscle contraction through modulation of L-type calcium currents. Is a receptor for leukotriene B4, a potent chemoattractant involved in inflammation and immune response. This chain is Leukotriene B4 receptor 1 (LTB4R), found in Bos taurus (Bovine).